The primary structure comprises 402 residues: Putative FBD-associated F-box protein At5g56690 (402 aa).

Residues 1-47 (MAEISGLPDDLLVKILAFLPTKVAISTSVLSKQWRFLWMWLPKLKYD) form the F-box domain. Residues 349-401 (SWSKNQGSVPKCFLNSLETFRVKWYYSEEQEDRDFLSLIFKHARCLKSTSILH) enclose the FBD domain.

The polypeptide is Putative FBD-associated F-box protein At5g56690 (Arabidopsis thaliana (Mouse-ear cress)).